Consider the following 209-residue polypeptide: PF03932 family protein CutC (209 aa).

The protein resides in the cytoplasm. The sequence is that of PF03932 family protein CutC from Streptococcus pyogenes serotype M6 (strain ATCC BAA-946 / MGAS10394).